The following is a 1021-amino-acid chain: Sodium/potassium-transporting ATPase subunit alpha-1 (1021 aa).

A propeptide spanning residues methionine 1 to valine 5 is cleaved from the precursor. Residues methionine 1–glutamate 11 are compositionally biased toward basic and acidic residues. The tract at residues methionine 1 to glutamate 36 is disordered. Residues glycine 4–proline 85 are Cytoplasmic-facing. Lysine 9 carries the post-translational modification N6-acetyllysine. The residue at position 10 (tyrosine 10) is a Phosphotyrosine. Position 16 is a phosphoserine; by PKC (serine 16). Lysine 21 carries the N6-acetyllysine modification. Positions lysine 26–glutamate 36 are enriched in basic and acidic residues. Phosphoserine occurs at positions 38 and 45. The interval proline 80–proline 82 is phosphoinositide-3 kinase binding. The helical transmembrane segment at glutamate 86–alanine 106 threads the bilayer. The Extracellular segment spans residues isoleucine 107 to tyrosine 129. The helical transmembrane segment at leucine 130–alanine 150 threads the bilayer. The Cytoplasmic segment spans residues lysine 151–isoleucine 286. The disordered stretch occupies residues serine 214–asparagine 233. A Phosphoserine modification is found at serine 226. The residue at position 258 (tyrosine 258) is a Phosphotyrosine. A helical transmembrane segment spans residues glutamate 287–isoleucine 306. At leucine 307–alanine 318 the chain is on the extracellular side. The chain crosses the membrane as a helical span at residues valine 319–alanine 336. Over threonine 337–leucine 770 the chain is Cytoplasmic. The active-site 4-aspartylphosphate intermediate is aspartate 374. Serine 450 and serine 482 each carry phosphoserine. Lysine 485 is a binding site for ATP. Position 540 is a phosphotyrosine (tyrosine 540). Residues arginine 594–aspartate 715 form a mediates interaction with SCN7A region. An N6-succinyllysine modification is found at lysine 659. 2 positions are modified to phosphoserine: serine 666 and serine 673. The Mg(2+) site is built by aspartate 715 and aspartate 719. Residues lysine 771–isoleucine 790 form a helical membrane-spanning segment. The Extracellular segment spans residues phenylalanine 791–leucine 800. The chain crosses the membrane as a helical span at residues glycine 801–alanine 821. The Cytoplasmic portion of the chain corresponds to tyrosine 822 to lysine 841. The chain crosses the membrane as a helical span at residues leucine 842–phenylalanine 864. Residues phenylalanine 865–cysteine 916 lie on the Extracellular side of the membrane. A helical membrane pass occupies residues histidine 917 to lysine 936. At threonine 937–asparagine 949 the chain is on the cytoplasmic side. Phosphoserine; by PKA is present on serine 941. The helical transmembrane segment at lysine 950–tyrosine 968 threads the bilayer. Residues cysteine 969–proline 983 lie on the Extracellular side of the membrane. The helical transmembrane segment at threonine 984–lysine 1004 threads the bilayer. Residues leucine 1005–tyrosine 1021 are Cytoplasmic-facing.

This sequence belongs to the cation transport ATPase (P-type) (TC 3.A.3) family. Type IIC subfamily. The sodium/potassium-transporting ATPase is composed of a catalytic alpha subunit, an auxiliary non-catalytic beta subunit and an additional regulatory subunit. Interacts with regulatory subunit FXYD1. Interacts with regulatory subunit FXYD3. Interacts with SIK1. Interacts with SLC35G1 and STIM1. Interacts with CLN3; this interaction regulates the sodium/potassium-transporting ATPase complex localization at the plasma membrane. Interacts with SCN7A; activates ATP1A1 P-type sodium:potassium-exchanging transporter activity which indirectly signals to nearby neurons to regulate sodium homeostasis. Post-translationally, phosphorylation on Tyr-10 modulates pumping activity. Phosphorylation of Ser-941 by PKA modulates the response of ATP1A1 to PKC. Dephosphorylation by protein phosphatase 2A (PP2A) following increases in intracellular sodium, leading to increase catalytic activity.

It is found in the cell membrane. Its subcellular location is the basolateral cell membrane. The protein localises to the sarcolemma. The protein resides in the cell projection. It localises to the axon. It is found in the melanosome. The catalysed reaction is K(+)(out) + Na(+)(in) + ATP + H2O = K(+)(in) + Na(+)(out) + ADP + phosphate + H(+). Its function is as follows. This is the catalytic component of the active enzyme, which catalyzes the hydrolysis of ATP coupled with the exchange of sodium and potassium ions across the plasma membrane. This action creates the electrochemical gradient of sodium and potassium ions, providing the energy for active transport of various nutrients. Could also be part of an osmosensory signaling pathway that senses body-fluid sodium levels and controls salt intake behavior as well as voluntary water intake to regulate sodium homeostasis. The sequence is that of Sodium/potassium-transporting ATPase subunit alpha-1 (ATP1A1) from Canis lupus familiaris (Dog).